The following is a 945-amino-acid chain: Collagen-like protein 1 (945 aa).

2 disordered regions span residues Ser80–Leu226 and Gly257–Glu441. Collagen-like domains lie at Gly83 to Lys142 and Gly146 to Lys205. Basic and acidic residues-rich tracts occupy residues Gln109–Gln145 and Asp168–Lys208. An N-linked (GlcNAc...) asparagine; by host glycan is attached at Asn211. 5 consecutive Collagen-like domains span residues Gly257–Lys376, Gly383–Asn442, Gly488–Lys547, Gly554–Val613, and Gly635–Ser694. A glycan (N-linked (GlcNAc...) asparagine; by host) is linked at Asn442. Over residues Gly488–Asp687 the composition is skewed to basic and acidic residues. The tract at residues Gly488 to Ser712 is disordered. Residues Ser703–Ser712 show a composition bias toward polar residues. Asn716 carries an N-linked (GlcNAc...) asparagine; by host glycan. The interval Thr733 to Ser768 is disordered. Positions Lys736 to Thr754 are enriched in basic and acidic residues. Positions Asp756 to Thr765 are enriched in low complexity.

May be hydroxylated on lysine by the viral-encoded procollagen-lysine,2-oxoglutarate 5-dioxygenase.

It is found in the virion. May participate in the formation of a layer of cross-linked glycosylated fibrils at the viral surface thus giving it a hairy-like appearance. The protein is Collagen-like protein 1 of Acanthamoeba polyphaga mimivirus (APMV).